The primary structure comprises 623 residues: Arginine decarboxylase 2 (623 aa).

Lysine 109 carries the N6-(pyridoxal phosphate)lysine modification. 295 to 305 (LDCGGGLGVDY) provides a ligand contact to substrate.

Belongs to the Orn/Lys/Arg decarboxylase class-II family. SpeA subfamily. The cofactor is pyridoxal 5'-phosphate. Mg(2+) serves as cofactor. As to expression, expressed in stems (at protein level).

The enzyme catalyses L-arginine + H(+) = agmatine + CO2. It functions in the pathway amine and polyamine biosynthesis; agmatine biosynthesis; agmatine from L-arginine: step 1/1. The polypeptide is Arginine decarboxylase 2 (ADC2) (Oryza sativa subsp. japonica (Rice)).